The chain runs to 206 residues: Large ribosomal subunit protein uL4 (206 aa).

A disordered region spans residues 47–71 (TRAQKGRSEVAGSTRKQWRQKGTGR).

Belongs to the universal ribosomal protein uL4 family. As to quaternary structure, part of the 50S ribosomal subunit.

Functionally, one of the primary rRNA binding proteins, this protein initially binds near the 5'-end of the 23S rRNA. It is important during the early stages of 50S assembly. It makes multiple contacts with different domains of the 23S rRNA in the assembled 50S subunit and ribosome. Forms part of the polypeptide exit tunnel. This is Large ribosomal subunit protein uL4 from Nitrosomonas eutropha (strain DSM 101675 / C91 / Nm57).